The following is a 185-amino-acid chain: Ribosome-recycling factor (185 aa).

Belongs to the RRF family.

The protein resides in the cytoplasm. Functionally, responsible for the release of ribosomes from messenger RNA at the termination of protein biosynthesis. May increase the efficiency of translation by recycling ribosomes from one round of translation to another. The sequence is that of Ribosome-recycling factor from Methylococcus capsulatus (strain ATCC 33009 / NCIMB 11132 / Bath).